The chain runs to 492 residues: PTS system N-acetylmuramic acid-specific EIIBC component (492 aa).

Residues 1 to 89 (MAKINQSVIA…NELLNSSTPT (89 aa)) form the PTS EIIB type-1 domain. Residue C28 is the Phosphocysteine intermediate; for EIIB activity of the active site. In terms of domain architecture, PTS EIIC type-1 spans 123–487 (TKFATIFTPL…KKIEVLKADV (365 aa)). Helical transmembrane passes span 125 to 145 (FATI…LLGF), 167 to 187 (IIGY…ILIG), 193 to 213 (AFGG…LSYN), 227 to 247 (FFGY…AAIL), 265 to 285 (MILT…IFIM), 311 to 331 (ILAG…FVPV), 344 to 364 (LFPI…ALYV), 378 to 398 (GAII…VTLP), 403 to 423 (FITA…IAYL), and 450 to 470 (IFVG…SGFV).

Its subcellular location is the cell inner membrane. The catalysed reaction is N-acetyl-beta-D-muramate(out) + N(pros)-phospho-L-histidyl-[protein] = N-acetyl-beta-D-muramate 6-phosphate(in) + L-histidyl-[protein]. Functionally, the phosphoenolpyruvate-dependent sugar phosphotransferase system (sugar PTS), a major carbohydrate active transport system, catalyzes the phosphorylation of incoming sugar substrates concomitantly with their translocation across the cell membrane. This system is involved in N-acetylmuramic acid (MurNAc) transport, yielding cytoplasmic MurNAc-6-P. Is also able to take up anhydro-N-acetylmuramic acid (anhMurNAc), but cannot phosphorylate the carbon 6, probably because of the 1,6-anhydro ring. This is PTS system N-acetylmuramic acid-specific EIIBC component (murP) from Photorhabdus laumondii subsp. laumondii (strain DSM 15139 / CIP 105565 / TT01) (Photorhabdus luminescens subsp. laumondii).